The sequence spans 348 residues: Photosystem II protein D1 (348 aa).

The next 3 helical transmembrane spans lie at 33 to 50 (YIGW…LATV), 122 to 137 (HFIF…EWEF), and 146 to 160 (WIFV…ASCA). Residue histidine 122 coordinates chlorophyll a. Tryptophan 130 contacts pheophytin a. Positions 174 and 193 each coordinate [CaMn4O5] cluster. A helical membrane pass occupies residues 201–222 (FHILGVAGVFGGSLFSAMHGSL). Histidine 202 contributes to the chlorophyll a binding site. A quinone is bound by residues histidine 219 and 268-269 (SF). Histidine 219 lines the Fe cation pocket. Histidine 276 is a binding site for Fe cation. Residues 278–292 (FLAAWPVIGIWFTAL) form a helical membrane-spanning segment. Residues histidine 336, glutamate 337, aspartate 346, and alanine 348 each contribute to the [CaMn4O5] cluster site.

The protein belongs to the reaction center PufL/M/PsbA/D family. As to quaternary structure, PSII is composed of 1 copy each of membrane proteins PsbA, PsbB, PsbC, PsbD, PsbE, PsbF, PsbH, PsbI, PsbJ, PsbK, PsbL, PsbM, PsbT, PsbX, PsbY, PsbZ, Psb30/Ycf12, at least 3 peripheral proteins of the oxygen-evolving complex and a large number of cofactors. It forms dimeric complexes. The D1/D2 heterodimer binds P680, chlorophylls that are the primary electron donor of PSII, and subsequent electron acceptors. It shares a non-heme iron and each subunit binds pheophytin, quinone, additional chlorophylls, carotenoids and lipids. D1 provides most of the ligands for the Mn4-Ca-O5 cluster of the oxygen-evolving complex (OEC). There is also a Cl(-1) ion associated with D1 and D2, which is required for oxygen evolution. The PSII complex binds additional chlorophylls, carotenoids and specific lipids. serves as cofactor. In terms of processing, tyr-165 forms a radical intermediate that is referred to as redox-active TyrZ, YZ or Y-Z.

The protein localises to the plastid. Its subcellular location is the chloroplast thylakoid membrane. The enzyme catalyses 2 a plastoquinone + 4 hnu + 2 H2O = 2 a plastoquinol + O2. Photosystem II (PSII) is a light-driven water:plastoquinone oxidoreductase that uses light energy to abstract electrons from H(2)O, generating O(2) and a proton gradient subsequently used for ATP formation. It consists of a core antenna complex that captures photons, and an electron transfer chain that converts photonic excitation into a charge separation. The D1/D2 (PsbA/PsbD) reaction center heterodimer binds P680, the primary electron donor of PSII as well as several subsequent electron acceptors. This Heterocapsa rotundata (Dinoflagellate) protein is Photosystem II protein D1.